Reading from the N-terminus, the 132-residue chain is Regulator of ribonuclease activity B (132 aa).

This sequence belongs to the RraB family. As to quaternary structure, interacts with the C-terminal region of Rne.

The protein resides in the cytoplasm. Functionally, globally modulates RNA abundance by binding to RNase E (Rne) and regulating its endonucleolytic activity. Can modulate Rne action in a substrate-dependent manner by altering the composition of the degradosome. This chain is Regulator of ribonuclease activity B, found in Alteromonas mediterranea (strain DSM 17117 / CIP 110805 / LMG 28347 / Deep ecotype).